We begin with the raw amino-acid sequence, 65 residues long: UPF0434 protein VFMJ11_A0475 (65 aa).

This sequence belongs to the UPF0434 family.

The polypeptide is UPF0434 protein VFMJ11_A0475 (Aliivibrio fischeri (strain MJ11) (Vibrio fischeri)).